A 262-amino-acid polypeptide reads, in one-letter code: Acyl-[acyl-carrier-protein]--UDP-N-acetylglucosamine O-acyltransferase (262 aa).

It belongs to the transferase hexapeptide repeat family. LpxA subfamily. Homotrimer.

The protein localises to the cytoplasm. The catalysed reaction is a (3R)-hydroxyacyl-[ACP] + UDP-N-acetyl-alpha-D-glucosamine = a UDP-3-O-[(3R)-3-hydroxyacyl]-N-acetyl-alpha-D-glucosamine + holo-[ACP]. It functions in the pathway glycolipid biosynthesis; lipid IV(A) biosynthesis; lipid IV(A) from (3R)-3-hydroxytetradecanoyl-[acyl-carrier-protein] and UDP-N-acetyl-alpha-D-glucosamine: step 1/6. Functionally, involved in the biosynthesis of lipid A, a phosphorylated glycolipid that anchors the lipopolysaccharide to the outer membrane of the cell. This is Acyl-[acyl-carrier-protein]--UDP-N-acetylglucosamine O-acyltransferase from Wigglesworthia glossinidia brevipalpis.